A 267-amino-acid chain; its full sequence is UPF0246 protein Dshi_3333 (267 aa).

This sequence belongs to the UPF0246 family.

The polypeptide is UPF0246 protein Dshi_3333 (Dinoroseobacter shibae (strain DSM 16493 / NCIMB 14021 / DFL 12)).